Reading from the N-terminus, the 339-residue chain is Protein RecA (339 aa).

Glycine 66–threonine 73 contacts ATP.

Belongs to the RecA family.

It localises to the cytoplasm. Its function is as follows. Can catalyze the hydrolysis of ATP in the presence of single-stranded DNA, the ATP-dependent uptake of single-stranded DNA by duplex DNA, and the ATP-dependent hybridization of homologous single-stranded DNAs. It interacts with LexA causing its activation and leading to its autocatalytic cleavage. The polypeptide is Protein RecA (Geobacter metallireducens (strain ATCC 53774 / DSM 7210 / GS-15)).